We begin with the raw amino-acid sequence, 334 residues long: L-lactate dehydrogenase B chain (334 aa).

Alanine 2 carries the post-translational modification N-acetylalanine. The residue at position 7 (lysine 7) is an N6-acetyllysine. Serine 44 is subject to Phosphoserine. NAD(+) is bound by residues 53-58 (DVLEDK) and arginine 100. Lysine 58 is subject to N6-acetyllysine. Arginine 107 serves as a coordination point for substrate. Lysine 119 is modified (N6-acetyllysine). NAD(+) is bound at residue asparagine 139. Asparagine 139 and arginine 170 together coordinate substrate. Histidine 194 serves as the catalytic Proton acceptor. The residue at position 240 (tyrosine 240) is a Phosphotyrosine. Residue threonine 249 coordinates substrate. The residue at position 329 (lysine 329) is an N6-acetyllysine.

Belongs to the LDH/MDH superfamily. LDH family. Homotetramer. Interacts with PTEN upstream reading frame protein MP31; the interaction leads to inhibition of mitochondrial lactate dehydrogenase activity, preventing conversion of lactate to pyruvate in mitochondria.

It localises to the cytoplasm. Its subcellular location is the mitochondrion inner membrane. The enzyme catalyses (S)-lactate + NAD(+) = pyruvate + NADH + H(+). The protein operates within fermentation; pyruvate fermentation to lactate; (S)-lactate from pyruvate: step 1/1. Interconverts simultaneously and stereospecifically pyruvate and lactate with concomitant interconversion of NADH and NAD(+). This chain is L-lactate dehydrogenase B chain (LDHB), found in Bos taurus (Bovine).